A 164-amino-acid polypeptide reads, in one-letter code: Phosphopantetheine adenylyltransferase (164 aa).

Serine 9 contacts substrate. ATP is bound by residues 9–10 and histidine 17; that span reads SF. Substrate is bound by residues lysine 41, threonine 74, and arginine 88. ATP is bound by residues 89 to 91, glutamate 99, and 124 to 130; these read GVR and NSFVASS.

This sequence belongs to the bacterial CoaD family. In terms of assembly, homohexamer. The cofactor is Mg(2+).

The protein resides in the cytoplasm. It carries out the reaction (R)-4'-phosphopantetheine + ATP + H(+) = 3'-dephospho-CoA + diphosphate. It functions in the pathway cofactor biosynthesis; coenzyme A biosynthesis; CoA from (R)-pantothenate: step 4/5. Functionally, reversibly transfers an adenylyl group from ATP to 4'-phosphopantetheine, yielding dephospho-CoA (dPCoA) and pyrophosphate. In Lactobacillus helveticus (strain DPC 4571), this protein is Phosphopantetheine adenylyltransferase.